The chain runs to 563 residues: F-box/kelch-repeat protein At5g42360 (563 aa).

The F-box domain occupies 129 to 175 (YRKHVYLPDDILEMCLMRLPLTSLLNAHLVCKKWQSMANTQRFLQMR). Kelch repeat units follow at residues 184 to 231 (WLFL…SIHE), 232 to 282 (EIYI…ATEV), and 355 to 402 (VLIA…IICN).

This is F-box/kelch-repeat protein At5g42360 from Arabidopsis thaliana (Mouse-ear cress).